We begin with the raw amino-acid sequence, 491 residues long: Glutamate--tRNA ligase (491 aa).

The short motif at 10–20 (PSPTGYLHIGG) is the 'HIGH' region element. A 'KMSKS' region motif is present at residues 243–247 (KISKR). Lysine 246 serves as a coordination point for ATP.

The protein belongs to the class-I aminoacyl-tRNA synthetase family. Glutamate--tRNA ligase type 1 subfamily. Monomer.

The protein resides in the cytoplasm. It catalyses the reaction tRNA(Glu) + L-glutamate + ATP = L-glutamyl-tRNA(Glu) + AMP + diphosphate. Catalyzes the attachment of glutamate to tRNA(Glu) in a two-step reaction: glutamate is first activated by ATP to form Glu-AMP and then transferred to the acceptor end of tRNA(Glu). This chain is Glutamate--tRNA ligase, found in Desulfotalea psychrophila (strain LSv54 / DSM 12343).